The chain runs to 1358 residues: DNA-directed RNA polymerase subunit beta (1358 aa).

It belongs to the RNA polymerase beta chain family. In terms of assembly, the RNAP catalytic core consists of 2 alpha, 1 beta, 1 beta' and 1 omega subunit. When a sigma factor is associated with the core the holoenzyme is formed, which can initiate transcription.

The catalysed reaction is RNA(n) + a ribonucleoside 5'-triphosphate = RNA(n+1) + diphosphate. Functionally, DNA-dependent RNA polymerase catalyzes the transcription of DNA into RNA using the four ribonucleoside triphosphates as substrates. The protein is DNA-directed RNA polymerase subunit beta of Francisella tularensis subsp. holarctica (strain OSU18).